Reading from the N-terminus, the 344-residue chain is WW domain binding protein 1-like (344 aa).

The helical transmembrane segment at 42-62 threads the bilayer; that stretch reads LWWFWLVWTIIIILSCCCVCH. Disordered regions lie at residues 132 to 250 and 302 to 321; these read LLPP…RFTG and CLSS…PRPP. Over residues 145 to 173 the composition is skewed to low complexity; that stretch reads PGADQPQGSQGAQSSPLSGPSRSSTRPPS. S173 carries the phosphoserine modification. The span at 212–228 shows a compositional bias: basic and acidic residues; it reads LDRDSECKEELLKDSSS.

The protein resides in the membrane. In Rattus norvegicus (Rat), this protein is WW domain binding protein 1-like (Wbp1l).